We begin with the raw amino-acid sequence, 78 residues long: Large ribosomal subunit protein uL29 (78 aa).

The segment at 59–78 (VESERKRGKSLSSTQTQKEE) is disordered. Over residues 68–78 (SLSSTQTQKEE) the composition is skewed to polar residues.

It belongs to the universal ribosomal protein uL29 family.

The polypeptide is Large ribosomal subunit protein uL29 (Synechococcus sp. (strain JA-3-3Ab) (Cyanobacteria bacterium Yellowstone A-Prime)).